The sequence spans 438 residues: Choline monooxygenase, chloroplastic (438 aa).

The N-terminal 58 residues, 1-58, are a transit peptide targeting the chloroplast; it reads MAASATTMLLKYPTTVCGIPNSSANNSTDPSNNIVQIPQTTTTNSPLLKFRTPNKPVN. The Rieske domain occupies 121–228; sequence WQVAGYSDQV…VAVWGPFILI (108 aa). Positions 163, 165, 182, and 185 each coordinate [2Fe-2S] cluster. His288 and His293 together coordinate Fe cation.

Belongs to the choline monooxygenase family. The cofactor is [2Fe-2S] cluster. Fe cation is required as a cofactor. It depends on Mg(2+) as a cofactor. In terms of tissue distribution, expressed in roots and leaves.

It is found in the plastid. Its subcellular location is the chloroplast stroma. It catalyses the reaction choline + 2 reduced [2Fe-2S]-[ferredoxin] + O2 + 2 H(+) = betaine aldehyde hydrate + 2 oxidized [2Fe-2S]-[ferredoxin] + H2O. Its pathway is amine and polyamine biosynthesis; betaine biosynthesis via choline pathway; betaine aldehyde from choline (monooxygenase route): step 1/1. Functionally, catalyzes the first step of the osmoprotectant glycine betaine synthesis. The sequence is that of Choline monooxygenase, chloroplastic (CMO) from Atriplex hortensis (Mountain spinach).